The chain runs to 316 residues: MVSTHNRDKPWDTDDIDKWKIEEFKEEDNASGQPFAEESSFMTLFPKYRESYLKTIWNDVTRALDKHNIACVLDLVEGSMTVKTTRKTYDPAIILKARDLIKLLARSVPFPQAVKILQDDMACDVIKIGNFVTNKERFVKRRQRLVGPNGNTLKALELLTKCYILVQGNTVSAMGPFKGLKEVRRVVEDCMKNIHPIYHIKELMIKRELAKRPELANEDWSRFLPMFKKRNVARKKPKKIRNVEKKVYTPFPPAQLPRKVDLEIESGEYFLSKREKQMKKLNEQKEKQMEREIERQEERAKDFIAPEEEAYKPNQN.

The region spanning 122-192 is the KH domain; that stretch reads ACDVIKIGNF…VRRVVEDCMK (71 aa). Basic and acidic residues predominate over residues 279–304; it reads KKLNEQKEKQMEREIERQEERAKDFI. A disordered region spans residues 279 to 316; the sequence is KKLNEQKEKQMEREIERQEERAKDFIAPEEEAYKPNQN.

Belongs to the KRR1 family. As to quaternary structure, component of the ribosomal small subunit (SSU) processome composed of at least 40 protein subunits and snoRNA U3. Interacts with snoRNA U3. Interacts with MPP10, KRI1 and with ribosomal proteins RPS1A, RPS4A, RPS4B, RPS8A, RPS8B, RPS11A, RPS11B, RPS13, RPS24, RPS25, RPL4A, RPL7B, RPL8, RPL23, RPL25 and RPL28.

The protein localises to the nucleus. Its subcellular location is the nucleolus. Functionally, required for 40S ribosome biogenesis. Involved in nucleolar processing of pre-18S ribosomal RNA and ribosome assembly. Essential for vegetative growth. This chain is KRR1 small subunit processome component, found in Saccharomyces cerevisiae (strain RM11-1a) (Baker's yeast).